The chain runs to 648 residues: cAMP-dependent protein kinase catalytic subunit (648 aa).

Low complexity-rich tracts occupy residues 1–20 (MSNS…TINN), 46–67 (SGNN…NSSG), 136–175 (QQQP…PQQQ), and 232–254 (NTPS…NPHT). 4 disordered regions span residues 1–25 (MSNS…KVNV), 40–86 (GGGG…TKMD), 121–175 (KVPS…PQQQ), and 219–290 (QQQQ…DTNP). Residues 255–290 (SGLSLQHAHSSYTPSNVLHSPTHFQSSLPTRLDTNP) show a composition bias toward polar residues. The region spanning 336–590 (FKQIRVIGTG…ALDVKNHRWF (255 aa)) is the Protein kinase domain. ATP-binding positions include 342–350 (IGTGTFGKV) and Lys-365. Asp-459 (proton acceptor) is an active-site residue. Thr-490 is subject to Phosphothreonine. Residues 591–648 (SDINWERLYQRRDNGPFIPKIQHQGDSSNFEMYDEEEMVEEPPSSNYVDPYAHLFKDF) form the AGC-kinase C-terminal domain.

It belongs to the protein kinase superfamily. AGC Ser/Thr protein kinase family. cAMP subfamily. As to quaternary structure, in Dictyostelium the holoenzyme is a dimer composed of a regulatory (R) and a catalytic (C) subunit. In the presence of cAMP it dissociates into the active C subunit and an R monomer.

The enzyme catalyses L-seryl-[protein] + ATP = O-phospho-L-seryl-[protein] + ADP + H(+). It catalyses the reaction L-threonyl-[protein] + ATP = O-phospho-L-threonyl-[protein] + ADP + H(+). Functionally, essential for differentiation and fruit morphogenesis. The chain is cAMP-dependent protein kinase catalytic subunit (pkaC) from Dictyostelium discoideum (Social amoeba).